Here is a 362-residue protein sequence, read N- to C-terminus: Molybdenum import ATP-binding protein ModC (362 aa).

The ABC transporter domain maps to 2–236 (ASPIEVRLQM…LDLPLAMGSD (235 aa)). 34–41 (GPSGSGKT) contributes to the ATP binding site. In terms of domain architecture, Mop spans 297–362 (QSSILNRLPV…AQIKAVAVLA (66 aa)).

The protein belongs to the ABC transporter superfamily. Molybdate importer (TC 3.A.1.8) family. As to quaternary structure, the complex is composed of two ATP-binding proteins (ModC), two transmembrane proteins (ModB) and a solute-binding protein (ModA).

It localises to the cell inner membrane. The enzyme catalyses molybdate(out) + ATP + H2O = molybdate(in) + ADP + phosphate + H(+). Its function is as follows. Part of the ABC transporter complex ModABC involved in molybdenum import. Responsible for energy coupling to the transport system. This chain is Molybdenum import ATP-binding protein ModC, found in Pseudomonas syringae pv. syringae (strain B728a).